Consider the following 587-residue polypeptide: Glutamine--tRNA ligase (587 aa).

Positions 58-68 (PEPNGYLHIGH) match the 'HIGH' region motif. Residues 59-61 (EPN) and 65-71 (HIGHAKS) contribute to the ATP site. L-glutamine-binding residues include Asp-91 and Tyr-240. Residues Thr-259 and 294-295 (RL) contribute to the ATP site. The 'KMSKS' region signature appears at 301–305 (VTSKR).

It belongs to the class-I aminoacyl-tRNA synthetase family. Monomer.

It is found in the cytoplasm. It carries out the reaction tRNA(Gln) + L-glutamine + ATP = L-glutaminyl-tRNA(Gln) + AMP + diphosphate. In Bordetella parapertussis (strain 12822 / ATCC BAA-587 / NCTC 13253), this protein is Glutamine--tRNA ligase.